Consider the following 111-residue polypeptide: Nucleoid-associated protein glr3498 (111 aa).

It belongs to the YbaB/EbfC family. In terms of assembly, homodimer.

It is found in the cytoplasm. It localises to the nucleoid. Its function is as follows. Binds to DNA and alters its conformation. May be involved in regulation of gene expression, nucleoid organization and DNA protection. This is Nucleoid-associated protein glr3498 from Gloeobacter violaceus (strain ATCC 29082 / PCC 7421).